Here is a 300-residue protein sequence, read N- to C-terminus: Protoheme IX farnesyltransferase (300 aa).

Transmembrane regions (helical) follow at residues 24–44 (VTQLAVFCAVIGMFLATPGMV), 48–68 (VLLGGTVGIGLLAGSAFAINC), 94–114 (LQILAFSTVLGGLGAWTLYTF), 118–138 (LTMWLTIATFVGYAVIYTLLL), 146–166 (IVIGGASGAMPPALGWAAVTG), 172–192 (AWILVLIIFVWTPPHFWVLAL), 217–237 (LHILLYTVILFAVTMMPFISG), 239–259 (SGAVYLTSAVLLGAIFLAYAW), and 278–298 (IVYLSLLFAALLVDHYARPVI).

Belongs to the UbiA prenyltransferase family. Protoheme IX farnesyltransferase subfamily.

It localises to the cell inner membrane. It catalyses the reaction heme b + (2E,6E)-farnesyl diphosphate + H2O = Fe(II)-heme o + diphosphate. It functions in the pathway porphyrin-containing compound metabolism; heme O biosynthesis; heme O from protoheme: step 1/1. Its function is as follows. Converts heme B (protoheme IX) to heme O by substitution of the vinyl group on carbon 2 of heme B porphyrin ring with a hydroxyethyl farnesyl side group. The chain is Protoheme IX farnesyltransferase from Burkholderia thailandensis (strain ATCC 700388 / DSM 13276 / CCUG 48851 / CIP 106301 / E264).